The chain runs to 822 residues: MSHLDLTRHRTRSPSPSQIFGSSTTPVATNSTHSEPSASSILRSILGEYADPKRPDVSGADPIRCPVKRVHKTPAVRASSPGRENVPVRTLQSSKDAEGDNFSGDGQLTPCGGPRPLAERLSPKLLAKQTRRKGVGAQKRTKGCDLVDRILTGRSIKASATAASKSSDLPQPQRKGIPTLVKEANPGEADWEDEGLQLEPATKRKYSWTPVKDTNLSIIDLTANSGSSPPSIPGREAQKFTSLVSRYGFAETSPLAMKNEFPEDFPTRKRQLDLLQGTTNSSSSEGSSNKSSGKCPLKVNGTKGRRSRKVTTITSLSTAQYGLKDSPVESFPSVDTTERPSGKRSKSQTKKGGNKKPAGVSDFKVAPTTDALKSLEDQVYLFGTSSQLERVSSDEDKLGVPSAPASSRQSARDRTSVSTLSKYKVSRNLWAAGWRDLDGSVADIEIVDMVNIDTPKSHESSTLTLPSTSTNASNQGFSSQNTINDRSKPSQTTSTTTESTGVESGQLVVPSLCEDLSEKAGYPAVPERETLSSREIASSESAYIETMPSFRGFTTAELAQKVAAFGFKPIKSREKMISLLEKCWQSQHKNSAPTSLPANNANPPDSHASGQKNVVRCDTGGSNASHTTKRASKAPQKKQSTSSTSHSAKAGPKQVDCSQERPNHAYLPHDSTQASSQPVIVIPDSEESGDDFQDTYLGSLNRTSSTNYHPLSANSIPDGSPLFLRTISQASTEEKTSDPSDINQQITRAIKAQPRMTAINGMKRPTWLEKILMYDPIWLEDLTVWLNTEGLDRVGEDREVSRLTVREWCESKGICCTWKKPT.

Disordered regions lie at residues 1–39 (MSHLDLTRHRTRSPSPSQIFGSSTTPVATNSTHSEPSAS), 73–117 (TPAV…PRPL), 277–362 (GTTN…GVSD), 390–418 (RVSSDEDKLGVPSAPASSRQSARDRTSVS), 456–507 (KSHE…SGQL), and 589–676 (KNSA…QASS). The span at 13-39 (SPSPSQIFGSSTTPVATNSTHSEPSAS) shows a compositional bias: polar residues. Positions 280-294 (NSSSSEGSSNKSSGK) are enriched in low complexity. Over residues 310–320 (VTTITSLSTAQ) the composition is skewed to polar residues. A compositionally biased stretch (basic residues) spans 342–354 (GKRSKSQTKKGGN). Positions 460 to 470 (SSTLTLPSTST) are enriched in low complexity. Residues 471 to 484 (NASNQGFSSQNTIN) show a composition bias toward polar residues. Positions 490–506 (SQTTSTTTESTGVESGQ) are enriched in low complexity. Residues 589 to 612 (KNSAPTSLPANNANPPDSHASGQK) show a composition bias toward polar residues. The segment covering 627-636 (TTKRASKAPQ) has biased composition (basic residues). Low complexity predominate over residues 637–650 (KKQSTSSTSHSAKA).

The protein belongs to the SLX4 family. In terms of assembly, forms a heterodimer with SLX1. Phosphorylated in response to DNA damage.

The protein resides in the nucleus. Its function is as follows. Regulatory subunit of the SLX1-SLX4 structure-specific endonuclease that resolves DNA secondary structures generated during DNA repair and recombination. Has endonuclease activity towards branched DNA substrates, introducing single-strand cuts in duplex DNA close to junctions with ss-DNA. The protein is Structure-specific endonuclease subunit SLX4 of Coccidioides immitis (strain RS) (Valley fever fungus).